The chain runs to 324 residues: Polyketide biosynthesis acyltransferase homolog PksD (324 aa).

The active site involves Ser-99.

It localises to the cytoplasm. The protein operates within antibiotic biosynthesis; bacillaene biosynthesis. Probably involved in some intermediate steps for the synthesis of the antibiotic polyketide bacillaene which is involved in secondary metabolism. This chain is Polyketide biosynthesis acyltransferase homolog PksD (pksD), found in Bacillus subtilis (strain 168).